A 251-amino-acid polypeptide reads, in one-letter code: Uridylate kinase (251 aa).

Residue 19 to 22 (KLSG) participates in ATP binding. A UMP-binding site is contributed by Gly61. Positions 62 and 66 each coordinate ATP. UMP is bound by residues Asp81 and 142 to 149 (TGNPYFTT). ATP contacts are provided by Thr169, Tyr175, and Asp178.

This sequence belongs to the UMP kinase family. In terms of assembly, homohexamer.

It is found in the cytoplasm. It catalyses the reaction UMP + ATP = UDP + ADP. It functions in the pathway pyrimidine metabolism; CTP biosynthesis via de novo pathway; UDP from UMP (UMPK route): step 1/1. With respect to regulation, inhibited by UTP. Functionally, catalyzes the reversible phosphorylation of UMP to UDP. This is Uridylate kinase from Anaeromyxobacter dehalogenans (strain 2CP-C).